Here is a 153-residue protein sequence, read N- to C-terminus: Glucose-6-phosphate 1-dehydrogenase (153 aa).

NADP(+) is bound by residues arginine 21 and lysine 120. Lysine 120 is a D-glucose 6-phosphate binding site.

Belongs to the glucose-6-phosphate dehydrogenase family.

Its subcellular location is the cytoplasm. The protein localises to the cytosol. The catalysed reaction is D-glucose 6-phosphate + NADP(+) = 6-phospho-D-glucono-1,5-lactone + NADPH + H(+). Its pathway is carbohydrate degradation; pentose phosphate pathway; D-ribulose 5-phosphate from D-glucose 6-phosphate (oxidative stage): step 1/3. In terms of biological role, cytosolic glucose-6-phosphate dehydrogenase that catalyzes the first and rate-limiting step of the oxidative branch within the pentose phosphate pathway/shunt, an alternative route to glycolysis for the dissimilation of carbohydrates and a major source of reducing power and metabolic intermediates for fatty acid and nucleic acid biosynthetic processes. This chain is Glucose-6-phosphate 1-dehydrogenase (ZW), found in Culex pipiens (House mosquito).